The chain runs to 874 residues: Alanine--tRNA ligase (874 aa).

Residues histidine 564, histidine 568, cysteine 666, and histidine 670 each coordinate Zn(2+).

Belongs to the class-II aminoacyl-tRNA synthetase family. It depends on Zn(2+) as a cofactor.

The protein resides in the cytoplasm. The catalysed reaction is tRNA(Ala) + L-alanine + ATP = L-alanyl-tRNA(Ala) + AMP + diphosphate. Catalyzes the attachment of alanine to tRNA(Ala) in a two-step reaction: alanine is first activated by ATP to form Ala-AMP and then transferred to the acceptor end of tRNA(Ala). Also edits incorrectly charged Ser-tRNA(Ala) and Gly-tRNA(Ala) via its editing domain. The sequence is that of Alanine--tRNA ligase from Carboxydothermus hydrogenoformans (strain ATCC BAA-161 / DSM 6008 / Z-2901).